The following is a 793-amino-acid chain: Acetyl-CoA decarbonylase/synthase complex subunit alpha (793 aa).

Residues Cys-55, Cys-58, Cys-63, and Cys-73 each coordinate [4Fe-4S] cluster. His-96 contacts CO. Residues His-229, Cys-257, and Cys-309 each coordinate [Ni-4Fe-4S] cluster. 4Fe-4S ferredoxin-type domains follow at residues 393–422 and 432–461; these read EQQF…ISEM and EPFS…LKLY. [4Fe-4S] cluster contacts are provided by Cys-403, Cys-406, Cys-409, Cys-413, Cys-441, Cys-444, Cys-447, and Cys-451. Cys-509, Cys-538, and Cys-573 together coordinate [Ni-4Fe-4S] cluster.

The protein belongs to the Ni-containing carbon monoxide dehydrogenase family. As to quaternary structure, heterotetramer of two alpha and two epsilon subunits. The ACDS complex is made up of alpha, epsilon, beta, gamma and delta subunits with a probable stoichiometry of (alpha(2)epsilon(2))(4)-beta(8)-(gamma(1)delta(1))(8). The cofactor is [4Fe-4S] cluster. It depends on [Ni-4Fe-4S] cluster as a cofactor.

The catalysed reaction is CO + 2 oxidized [2Fe-2S]-[ferredoxin] + H2O = 2 reduced [2Fe-2S]-[ferredoxin] + CO2 + 2 H(+). Its function is as follows. Part of the ACDS complex that catalyzes the reversible cleavage of acetyl-CoA, allowing autotrophic growth from CO(2). The alpha-epsilon subcomponent functions as a carbon monoxide dehydrogenase. This is Acetyl-CoA decarbonylase/synthase complex subunit alpha from Methanothrix soehngenii (Methanosaeta concilii).